The sequence spans 210 residues: Large ribosomal subunit protein uL22 (210 aa).

Positions 123–210 (NEMTSKETVK…TKSTKKEGSK (88 aa)) are disordered. The span at 126–157 (TSKETVKEPAKKPSAKVEKPAEAKAPKQETST) shows a compositional bias: basic and acidic residues. Residues 158-185 (KKPTTTTESKPKTSKAPAQKQAAKVAKP) are compositionally biased toward low complexity.

This sequence belongs to the universal ribosomal protein uL22 family. In terms of assembly, part of the 50S ribosomal subunit.

Its function is as follows. This protein binds specifically to 23S rRNA; its binding is stimulated by other ribosomal proteins, e.g. L4, L17, and L20. It is important during the early stages of 50S assembly. It makes multiple contacts with different domains of the 23S rRNA in the assembled 50S subunit and ribosome. In terms of biological role, the globular domain of the protein is located near the polypeptide exit tunnel on the outside of the subunit, while an extended beta-hairpin is found that lines the wall of the exit tunnel in the center of the 70S ribosome. This Metamycoplasma arthritidis (strain 158L3-1) (Mycoplasma arthritidis) protein is Large ribosomal subunit protein uL22.